The chain runs to 363 residues: Zinc finger protein 830 (363 aa).

An N-acetylalanine modification is found at A2. The stretch at 16-40 (VNQEELRRLMREKQRLSTNRKRIES) forms a coiled coil. Residues 53-75 (CALCNTPVKSELLWQTHVLGKQH) form a C2H2-type zinc finger. Positions 81–213 (ELKGAKGATQ…NPPKAPLVPH (133 aa)) are disordered. A compositionally biased stretch (polar residues) spans 90–99 (QGPSTGTVPQ). Basic and acidic residues predominate over residues 104-115 (RATDVESQDAKK). A compositionally biased stretch (low complexity) spans 129–143 (SASSANLDAARAAPS). Positions 152-164 (DYDDEEEEEEEGG) are enriched in acidic residues. Positions 165–184 (GEERRDSSKHLPDAQGKEHS) are enriched in basic and acidic residues. A compositionally biased stretch (polar residues) spans 189 to 205 (RETTSNVLPNDPFNTNP). A Phosphoserine modification is found at S216. A coiled-coil region spans residues 303 to 331 (IECYRRVEKLRNRQDEIKNKLKEVLTIKE). Phosphoserine is present on residues S342 and S353.

In terms of assembly, component of the XAB2 complex, a multimeric protein complex composed of XAB2, PRPF19, AQR, ZNF830, ISY1, and PPIE; this complex binds preferentially to RNA. Interacts with XAB2. Identified in a pentameric intron-binding (IB) complex composed of AQR, XAB2, ISY1, ZNF830 and PPIE that is incorporated into the spliceosome as a preassembled complex. The IB complex does not contain PRPF19. In terms of processing, phosphorylated in response to DNA damage by the cell cycle checkpoint kinases ATR/ATM. In terms of tissue distribution, widely expressed at low level. Expressed in oocytes from primordial to antral follicles. Also detected in somatic cells of the ovary, namely, in granulosa cells from the pre-antral follicle stage onward.

It localises to the nucleus. Its subcellular location is the chromosome. The protein resides in the nucleus speckle. May play a role in pre-mRNA splicing as component of the spliceosome. Acts as an important regulator of the cell cycle that participates in the maintenance of genome integrity. During cell cycle progression in embryonic fibroblast, prevents replication fork collapse, double-strand break formation and cell cycle checkpoint activation. Controls mitotic cell cycle progression and cell survival in rapidly proliferating intestinal epithelium and embryonic stem cells. During the embryo preimplantation, controls different aspects of M phase. During early oocyte growth, plays a role in oocyte survival by preventing chromosomal breaks formation, activation of TP63 and reduction of transcription. In Mus musculus (Mouse), this protein is Zinc finger protein 830.